The chain runs to 566 residues: MKQSMVFSPTLREVPADAEIKSHQLLLRAGFMRQNASGIYSFLPFGLKVLHKVERIVREEMERAGAVELLMPAMQAAELWQESGRWYSYGSELMRMKDRNAREFALGATHEEVITDLVRDEVKSYKKLPLTLYQIQTKFRDEQRPRFGLLRGREFLMKDAYSFHATQESLDEVYDRLYKAYSNIFARCGLNFRAVIADSGAMGGKDTHEFMVLSDVGEDTIAYSDTSDYAANIEMAPVVATYTKSDEAEKALEKVATPDQKAIEEVSAFLNIEAEKCIKSMVFKVDEKLVVVLVRGDHEVNDVKVKNVYGASVVELASHEEVKELLHCEVGSLGPIGVTGDIEIIADHAVASIVNGCSGANEEGFHYVNVNPERDFKVSQYTDLRFIQEGDQSPDGNGTILFARGIEVGHVFKLGTRYSEAMNATFLDENGKTQPLIMGCYGIGVSRTVAAIAEQFNDENGLVWPKAVAPFHVHVIPVNMKSDAQREMGENIYNSLQEQGYEVLLDDRAERAGVKFADADLFGLPVRVTVGKKADEGIVEVKVRATGESEEVKVEELQTYIANILK.

Belongs to the class-II aminoacyl-tRNA synthetase family. ProS type 1 subfamily. As to quaternary structure, homodimer.

Its subcellular location is the cytoplasm. The enzyme catalyses tRNA(Pro) + L-proline + ATP = L-prolyl-tRNA(Pro) + AMP + diphosphate. Functionally, catalyzes the attachment of proline to tRNA(Pro) in a two-step reaction: proline is first activated by ATP to form Pro-AMP and then transferred to the acceptor end of tRNA(Pro). As ProRS can inadvertently accommodate and process non-cognate amino acids such as alanine and cysteine, to avoid such errors it has two additional distinct editing activities against alanine. One activity is designated as 'pretransfer' editing and involves the tRNA(Pro)-independent hydrolysis of activated Ala-AMP. The other activity is designated 'posttransfer' editing and involves deacylation of mischarged Ala-tRNA(Pro). The misacylated Cys-tRNA(Pro) is not edited by ProRS. This Bacillus cereus (strain Q1) protein is Proline--tRNA ligase.